Here is a 121-residue protein sequence, read N- to C-terminus: Small ribosomal subunit protein uS13 (121 aa).

Residues 93–121 (RGLPMRGQRTRTNARTRKGPRKGAAALKK) are disordered.

Belongs to the universal ribosomal protein uS13 family. In terms of assembly, part of the 30S ribosomal subunit. Forms a loose heterodimer with protein S19. Forms two bridges to the 50S subunit in the 70S ribosome.

In terms of biological role, located at the top of the head of the 30S subunit, it contacts several helices of the 16S rRNA. In the 70S ribosome it contacts the 23S rRNA (bridge B1a) and protein L5 of the 50S subunit (bridge B1b), connecting the 2 subunits; these bridges are implicated in subunit movement. Contacts the tRNAs in the A and P-sites. In Paracidovorax citrulli (strain AAC00-1) (Acidovorax citrulli), this protein is Small ribosomal subunit protein uS13.